The chain runs to 471 residues: 3-isopropylmalate dehydratase large subunit (471 aa).

Positions 347, 407, and 410 each coordinate [4Fe-4S] cluster.

The protein belongs to the aconitase/IPM isomerase family. LeuC type 1 subfamily. Heterodimer of LeuC and LeuD. The cofactor is [4Fe-4S] cluster.

The catalysed reaction is (2R,3S)-3-isopropylmalate = (2S)-2-isopropylmalate. Its pathway is amino-acid biosynthesis; L-leucine biosynthesis; L-leucine from 3-methyl-2-oxobutanoate: step 2/4. In terms of biological role, catalyzes the isomerization between 2-isopropylmalate and 3-isopropylmalate, via the formation of 2-isopropylmaleate. The sequence is that of 3-isopropylmalate dehydratase large subunit from Prochlorococcus marinus (strain MIT 9211).